We begin with the raw amino-acid sequence, 70 residues long: Large ribosomal subunit protein bL31 (70 aa).

K8 is subject to N6-acetyllysine. Positions 16, 18, 37, and 40 each coordinate Zn(2+).

Belongs to the bacterial ribosomal protein bL31 family. Type A subfamily. Part of the 50S ribosomal subunit. Requires Zn(2+) as cofactor.

Binds the 23S rRNA. The polypeptide is Large ribosomal subunit protein bL31 (Shigella flexneri).